Here is a 284-residue protein sequence, read N- to C-terminus: uncharacterized protein (284 aa).

The AB hydrolase-1 domain maps to 25 to 123 (PILVMHGGHS…NTLTLQSAVT (99 aa)). The active site involves Ser-96.

This sequence belongs to the AB hydrolase superfamily.

This is an uncharacterized protein from Bacillus subtilis (strain 168).